The chain runs to 448 residues: Methylenetetrahydrofolate--tRNA-(uracil-5-)-methyltransferase TrmFO (448 aa).

Gly-10 to Gly-15 lines the FAD pocket.

Belongs to the MnmG family. TrmFO subfamily. Requires FAD as cofactor.

Its subcellular location is the cytoplasm. It carries out the reaction uridine(54) in tRNA + (6R)-5,10-methylene-5,6,7,8-tetrahydrofolate + NADH + H(+) = 5-methyluridine(54) in tRNA + (6S)-5,6,7,8-tetrahydrofolate + NAD(+). The catalysed reaction is uridine(54) in tRNA + (6R)-5,10-methylene-5,6,7,8-tetrahydrofolate + NADPH + H(+) = 5-methyluridine(54) in tRNA + (6S)-5,6,7,8-tetrahydrofolate + NADP(+). In terms of biological role, catalyzes the folate-dependent formation of 5-methyl-uridine at position 54 (M-5-U54) in all tRNAs. This chain is Methylenetetrahydrofolate--tRNA-(uracil-5-)-methyltransferase TrmFO, found in Lactococcus lactis subsp. cremoris (strain SK11).